The primary structure comprises 402 residues: Serine--glyoxylate aminotransferase (402 aa).

An N6-(pyridoxal phosphate)lysine modification is found at lysine 201.

It belongs to the class-V pyridoxal-phosphate-dependent aminotransferase family. The cofactor is pyridoxal 5'-phosphate.

It catalyses the reaction glyoxylate + L-serine = 3-hydroxypyruvate + glycine. It functions in the pathway one-carbon metabolism; formaldehyde assimilation via serine pathway. This chain is Serine--glyoxylate aminotransferase, found in Methylorubrum extorquens (strain ATCC 14718 / DSM 1338 / JCM 2805 / NCIMB 9133 / AM1) (Methylobacterium extorquens).